A 100-amino-acid polypeptide reads, in one-letter code: Large ribosomal subunit protein eL36B (100 aa).

Belongs to the eukaryotic ribosomal protein eL36 family. Component of the large ribosomal subunit (LSU). Mature yeast ribosomes consist of a small (40S) and a large (60S) subunit. The 40S small subunit contains 1 molecule of ribosomal RNA (18S rRNA) and 33 different proteins (encoded by 57 genes). The large 60S subunit contains 3 rRNA molecules (25S, 5.8S and 5S rRNA) and 46 different proteins (encoded by 81 genes).

The protein resides in the cytoplasm. Its function is as follows. Component of the ribosome, a large ribonucleoprotein complex responsible for the synthesis of proteins in the cell. The small ribosomal subunit (SSU) binds messenger RNAs (mRNAs) and translates the encoded message by selecting cognate aminoacyl-transfer RNA (tRNA) molecules. The large subunit (LSU) contains the ribosomal catalytic site termed the peptidyl transferase center (PTC), which catalyzes the formation of peptide bonds, thereby polymerizing the amino acids delivered by tRNAs into a polypeptide chain. The nascent polypeptides leave the ribosome through a tunnel in the LSU and interact with protein factors that function in enzymatic processing, targeting, and the membrane insertion of nascent chains at the exit of the ribosomal tunnel. This chain is Large ribosomal subunit protein eL36B, found in Saccharomyces cerevisiae (strain ATCC 204508 / S288c) (Baker's yeast).